The primary structure comprises 396 residues: Interleukin-3 receptor subunit alpha (396 aa).

The N-terminal stretch at 1–16 (MAANLWLILGLLASHS) is a signal peptide. The Extracellular segment spans residues 17-331 (SDLAAVREAP…VCPPEVMPVK (315 aa)). 5 disulfides stabilise this stretch: Cys62–Cys79, Cys87–Cys223, Cys125–Cys134, Cys165–Cys187, and Cys245–Cys323. Asn91 carries an N-linked (GlcNAc...) asparagine glycan. 4 N-linked (GlcNAc...) asparagine glycosylation sites follow: Asn213, Asn246, Asn272, and Asn283. The short motif at 312 to 316 (LSSWS) is the WSXWS motif element. The chain crosses the membrane as a helical span at residues 332-355 (TALVTSVATVLGAGLVAAGLLLWW). The Cytoplasmic segment spans residues 356–396 (RKSLLYRLCPPIPRLRLPLAGEMVVWEPALEDCEVTPVTDA). Residue Lys357 forms a Glycyl lysine isopeptide (Lys-Gly) (interchain with G-Cter in ubiquitin) linkage. Residues 363–371 (LCPPIPRLR) carry the Box 1 motif motif.

Belongs to the type I cytokine receptor family. Type 5 subfamily. Interacts with IL3. Heterodimer of an alpha and a beta subunit. The beta subunit is common to the IL3, IL5 and GM-CSF receptors. In terms of processing, ubiquitinated at Lys-357 by RNFT2 in response to IL3. Ubiquitination leads ligand-induced degradation by the proteasome. Ubiquitinated by RNF128 via 'Lys-27'-linked polyubiquitination, facilitating its degradation through the lysosomal pathway.

Its subcellular location is the cell membrane. It localises to the endomembrane system. Its function is as follows. Cell surface receptor for IL3 expressed on hematopoietic progenitor cells, monocytes and B-lymphocytes that controls the production and differentiation of hematopoietic progenitor cells into lineage-restricted cells. Ligand stimulation rapidly induces hetrodimerization with IL3RB, phosphorylation and enzyme activity of effector proteins such as JAK2 and PI3K that play a role in signaling cell proliferation and differentiation. Activation of JAK2 leads to STAT5-mediated transcriptional program. This Mus musculus (Mouse) protein is Interleukin-3 receptor subunit alpha (Il3ra).